Consider the following 269-residue polypeptide: Imidazoleglycerol-phosphate dehydratase 3, chloroplastic (269 aa).

Residues 1-51 (MTTAPVVSPSLSRLHSAPASPFPKAPVGSGAGVAFPARPYGPSLRLRSAVM) constitute a chloroplast transit peptide. Substrate is bound by residues glutamate 83, 109-117 (HMLDQLASH), 135-139 (HHSNE), arginine 161, and arginine 183. Mn(2+) is bound by residues histidine 109, histidine 135, histidine 136, and glutamate 139. Histidine 207, histidine 231, histidine 232, and glutamate 235 together coordinate Mn(2+). Substrate-binding positions include 231 to 239 (HHIIEATFK) and 261 to 263 (SSK).

This sequence belongs to the imidazoleglycerol-phosphate dehydratase family. The cofactor is Mn(2+).

It localises to the plastid. It is found in the chloroplast. It catalyses the reaction D-erythro-1-(imidazol-4-yl)glycerol 3-phosphate = 3-(imidazol-4-yl)-2-oxopropyl phosphate + H2O. The protein operates within amino-acid biosynthesis; L-histidine biosynthesis; L-histidine from 5-phospho-alpha-D-ribose 1-diphosphate: step 6/9. The sequence is that of Imidazoleglycerol-phosphate dehydratase 3, chloroplastic from Triticum aestivum (Wheat).